Reading from the N-terminus, the 310-residue chain is Alpha/beta hydrolase domain-containing protein 17A (310 aa).

Residues S190, D255, and H284 each act as charge relay system in the active site. At S307 the chain carries Phosphoserine.

This sequence belongs to the AB hydrolase superfamily. ABHD17 family. In terms of processing, palmitoylated on cysteine residues located in a cysteine cluster at the N-terminus which promotes membrane localization. Palmitoylation is required for post-synaptic localization and for depalmitoylating activity towards DLG4/PSD95.

The protein localises to the cell membrane. Its subcellular location is the endosome membrane. It localises to the cell projection. It is found in the dendritic spine. The protein resides in the postsynaptic density membrane. It carries out the reaction S-hexadecanoyl-L-cysteinyl-[protein] + H2O = L-cysteinyl-[protein] + hexadecanoate + H(+). Its function is as follows. Hydrolyzes fatty acids from S-acylated cysteine residues in proteins. Has depalmitoylating activity towards NRAS. Has depalmitoylating activity towards DLG4/PSD95. May have depalmitoylating activity towards MAP6. The polypeptide is Alpha/beta hydrolase domain-containing protein 17A (Bos taurus (Bovine)).